The chain runs to 479 residues: Aldehyde dehydrogenase family 3 member B3 (479 aa).

Residues glutamate 223 and cysteine 257 contribute to the active site. Cysteine 476 carries S-geranylgeranyl cysteine lipidation. Positions 477–479 (TLL) are cleaved as a propeptide — removed in mature form.

It belongs to the aldehyde dehydrogenase family. In terms of processing, geranylgeranylation is important for membrane localization and enzyme activity. Expressed in testis, kidney, small intestine, spleen, white adipose tissue, liver and lung.

It localises to the cell membrane. The enzyme catalyses an aldehyde + NAD(+) + H2O = a carboxylate + NADH + 2 H(+). It carries out the reaction hexadecanoate + NADH + 2 H(+) = hexadecanal + NAD(+) + H2O. It catalyses the reaction octanal + NAD(+) + H2O = octanoate + NADH + 2 H(+). Functionally, oxidizes medium and long chain aldehydes into non-toxic fatty acids. This chain is Aldehyde dehydrogenase family 3 member B3, found in Mus musculus (Mouse).